The following is a 328-amino-acid chain: ABC transporter I family member 20 (328 aa).

Residues 14-257 (VEISGLRFTY…SKKSLMRTVE (244 aa)) form the ABC transporter domain. An ATP-binding site is contributed by 55-62 (GSNGAGKT). The segment at 263–295 (ERDEERKRRKERKANGLPEFETRTEESRVTGDP) is disordered. A compositionally biased stretch (basic and acidic residues) spans 282–291 (FETRTEESRV).

Belongs to the ABC transporter superfamily. ABCI family.

It is found in the cytoplasm. The sequence is that of ABC transporter I family member 20 (ABCI20) from Arabidopsis thaliana (Mouse-ear cress).